Consider the following 177-residue polypeptide: MADNTVILDGSGVKRALTRIAHEVLEKNKGVEGLVLVGIRTGGVFLAQELAERLVEIEGVEVPCGAVDITMYRDDIKGHTEHLPVGKTELPFSIEGKKVVLVDDVLFTGRTIRAALDALMDQGRPSSIQLAVLVDRGHRDLPIRADFVGRNVPTSRSENIVVAFDADNKPTEVILQK.

The PRPP-binding signature appears at valine 99–threonine 111.

The protein belongs to the purine/pyrimidine phosphoribosyltransferase family. PyrR subfamily.

The catalysed reaction is UMP + diphosphate = 5-phospho-alpha-D-ribose 1-diphosphate + uracil. Functionally, regulates the transcription of the pyrimidine nucleotide (pyr) operon in response to exogenous pyrimidines. In terms of biological role, also displays a weak uracil phosphoribosyltransferase activity which is not physiologically significant. This is Bifunctional protein PyrR from Geobacter sp. (strain M21).